Here is a 274-residue protein sequence, read N- to C-terminus: Type III pantothenate kinase (274 aa).

6–13 serves as a coordination point for ATP; the sequence is DVGNTNTV. Residues Tyr-110 and 117 to 120 contribute to the substrate site; that span reads GADR. The active-site Proton acceptor is Asp-119. Asp-139 lines the K(+) pocket. Thr-142 contacts ATP. Thr-194 is a substrate binding site.

Belongs to the type III pantothenate kinase family. Homodimer. The cofactor is NH4(+). K(+) serves as cofactor.

Its subcellular location is the cytoplasm. The enzyme catalyses (R)-pantothenate + ATP = (R)-4'-phosphopantothenate + ADP + H(+). It functions in the pathway cofactor biosynthesis; coenzyme A biosynthesis; CoA from (R)-pantothenate: step 1/5. Functionally, catalyzes the phosphorylation of pantothenate (Pan), the first step in CoA biosynthesis. This Koribacter versatilis (strain Ellin345) protein is Type III pantothenate kinase.